The chain runs to 207 residues: Ribonuclease HII (207 aa).

The RNase H type-2 domain maps to His-19 to Glu-207. A divalent metal cation contacts are provided by Asp-25, Glu-26, and Asp-117.

This sequence belongs to the RNase HII family. Mn(2+) serves as cofactor. The cofactor is Mg(2+).

Its subcellular location is the cytoplasm. The enzyme catalyses Endonucleolytic cleavage to 5'-phosphomonoester.. Endonuclease that specifically degrades the RNA of RNA-DNA hybrids. This Vibrio vulnificus (strain CMCP6) protein is Ribonuclease HII.